A 134-amino-acid polypeptide reads, in one-letter code: Small ribosomal subunit protein uS8c (134 aa).

This sequence belongs to the universal ribosomal protein uS8 family. In terms of assembly, part of the 30S ribosomal subunit.

It is found in the plastid. Its subcellular location is the chloroplast. One of the primary rRNA binding proteins, it binds directly to 16S rRNA central domain where it helps coordinate assembly of the platform of the 30S subunit. The polypeptide is Small ribosomal subunit protein uS8c (rps8) (Aethionema grandiflorum (Persian stone-cress)).